A 350-amino-acid polypeptide reads, in one-letter code: Phosphate acyltransferase (350 aa).

The protein belongs to the PlsX family. Homodimer. Probably interacts with PlsY.

It is found in the cytoplasm. It catalyses the reaction a fatty acyl-[ACP] + phosphate = an acyl phosphate + holo-[ACP]. Its pathway is lipid metabolism; phospholipid metabolism. Its function is as follows. Catalyzes the reversible formation of acyl-phosphate (acyl-PO(4)) from acyl-[acyl-carrier-protein] (acyl-ACP). This enzyme utilizes acyl-ACP as fatty acyl donor, but not acyl-CoA. This Chelativorans sp. (strain BNC1) protein is Phosphate acyltransferase.